Here is an 87-residue protein sequence, read N- to C-terminus: Small ribosomal subunit protein bS16 (87 aa).

Belongs to the bacterial ribosomal protein bS16 family.

This Desulfatibacillum aliphaticivorans protein is Small ribosomal subunit protein bS16.